Consider the following 519-residue polypeptide: Maturase K (519 aa).

Belongs to the intron maturase 2 family. MatK subfamily.

The protein resides in the plastid. Its subcellular location is the chloroplast. Usually encoded in the trnK tRNA gene intron. Probably assists in splicing its own and other chloroplast group II introns. This chain is Maturase K, found in Dioscorea elephantipes (Elephant's foot yam).